Consider the following 358-residue polypeptide: Putative pyruvyl transferase EpsI (358 aa).

The protein belongs to the polysaccharide pyruvyl transferase family.

Its function is as follows. May be involved in the production of the exopolysaccharide (EPS) component of the extracellular matrix during biofilm formation. EPS is responsible for the adhesion of chains of cells into bundles. This chain is Putative pyruvyl transferase EpsI (epsI), found in Bacillus subtilis (strain 168).